The sequence spans 478 residues: Cytochrome c-552 (478 aa).

Residues 1-26 (MTRIKINARRIFSLLIPFFFFTSVHA) form the signal peptide. Residue His94 coordinates heme c. 3 residues coordinate heme: Cys122, Cys125, and Lys126. Residues Cys160, Cys163, His164, Cys209, Cys212, and His213 each coordinate heme c. Positions 215, 216, 261, and 263 each coordinate Ca(2+). Tyr216 provides a ligand contact to substrate. His264 contacts substrate. Residues His275, Cys282, Cys285, His286, His301, Cys314, Cys317, His318, and His393 each contribute to the heme c site.

It belongs to the cytochrome c-552 family. Ca(2+) is required as a cofactor. It depends on heme c as a cofactor.

Its subcellular location is the periplasm. It catalyses the reaction 6 Fe(III)-[cytochrome c] + NH4(+) + 2 H2O = 6 Fe(II)-[cytochrome c] + nitrite + 8 H(+). It functions in the pathway nitrogen metabolism; nitrate reduction (assimilation). In terms of biological role, catalyzes the reduction of nitrite to ammonia, consuming six electrons in the process. This Escherichia coli O17:K52:H18 (strain UMN026 / ExPEC) protein is Cytochrome c-552.